The sequence spans 407 residues: Argininosuccinate synthase (407 aa).

ATP-binding positions include 11 to 19 (AYSGGLDTS) and Ala-38. L-citrulline contacts are provided by Tyr-91 and Ser-96. Residue Gly-121 coordinates ATP. L-aspartate is bound by residues Thr-123, Asn-127, and Asp-128. Asn-127 contributes to the L-citrulline binding site. Positions 131, 181, 190, 266, and 278 each coordinate L-citrulline.

It belongs to the argininosuccinate synthase family. Type 1 subfamily. Homotetramer.

The protein localises to the cytoplasm. It catalyses the reaction L-citrulline + L-aspartate + ATP = 2-(N(omega)-L-arginino)succinate + AMP + diphosphate + H(+). The protein operates within amino-acid biosynthesis; L-arginine biosynthesis; L-arginine from L-ornithine and carbamoyl phosphate: step 2/3. The protein is Argininosuccinate synthase of Campylobacter concisus (strain 13826).